The primary structure comprises 182 residues: Ribosome maturation factor RimM (182 aa).

The 74-residue stretch at 106-179 (EGEFHVLDLI…RIEITPPPGL (74 aa)) folds into the PRC barrel domain.

Belongs to the RimM family. Binds ribosomal protein uS19.

The protein resides in the cytoplasm. An accessory protein needed during the final step in the assembly of 30S ribosomal subunit, possibly for assembly of the head region. Essential for efficient processing of 16S rRNA. May be needed both before and after RbfA during the maturation of 16S rRNA. It has affinity for free ribosomal 30S subunits but not for 70S ribosomes. The sequence is that of Ribosome maturation factor RimM from Synechococcus elongatus (strain ATCC 33912 / PCC 7942 / FACHB-805) (Anacystis nidulans R2).